The sequence spans 236 residues: Ribose-5-phosphate isomerase A (236 aa).

Residues 31–34 (TGST), 84–87 (DGAD), and 97–100 (KGGG) contribute to the substrate site. Glu106 serves as the catalytic Proton acceptor. Lys124 serves as a coordination point for substrate.

The protein belongs to the ribose 5-phosphate isomerase family. As to quaternary structure, homodimer.

The enzyme catalyses aldehydo-D-ribose 5-phosphate = D-ribulose 5-phosphate. It participates in carbohydrate degradation; pentose phosphate pathway; D-ribose 5-phosphate from D-ribulose 5-phosphate (non-oxidative stage): step 1/1. In terms of biological role, catalyzes the reversible conversion of ribose-5-phosphate to ribulose 5-phosphate. This Polynucleobacter necessarius subsp. necessarius (strain STIR1) protein is Ribose-5-phosphate isomerase A.